The sequence spans 500 residues: Monocarboxylate transporter 1 (500 aa).

The Cytoplasmic segment spans residues Met-1–Val-22. A helical transmembrane segment spans residues Val-23–Phe-44. Lys-38 serves as a coordination point for (S)-lactate. The Extracellular portion of the chain corresponds to Lys-45 to Thr-55. The chain crosses the membrane as a helical span at residues Ser-56–Val-80. Residues Asn-81–Gly-84 lie on the Cytoplasmic side of the membrane. The helical transmembrane segment at Ser-85–Phe-105 threads the bilayer. Residues Cys-106 to Val-109 lie on the Extracellular side of the membrane. Residues Gln-110–Leu-132 form a helical membrane-spanning segment. The Cytoplasmic segment spans residues Thr-133 to Ala-146. The chain crosses the membrane as a helical span at residues Asn-147–Phe-169. The Extracellular portion of the chain corresponds to Gly-170–Trp-174. Residues Arg-175–Leu-194 traverse the membrane as a helical segment. Residues Met-195 to Arg-261 lie on the Cytoplasmic side of the membrane. 2 positions are modified to phosphoserine: Ser-210 and Ser-213. Position 231 is a phosphothreonine (Thr-231). The helical transmembrane segment at Gly-262–Gly-288 threads the bilayer. The Extracellular portion of the chain corresponds to Lys-289–Ser-295. Residues Glu-296–Gly-317 traverse the membrane as a helical segment. Asp-309 serves as a coordination point for H(+). Arg-313 contributes to the (S)-lactate binding site. Residues Leu-318–Arg-328 are Cytoplasmic-facing. Residues Ile-329–Leu-349 traverse the membrane as a helical segment. The Extracellular segment spans residues Ser-350–Tyr-353. A helical transmembrane segment spans residues Val-354 to Phe-375. Residues Glu-376–Ser-389 are Cytoplasmic-facing. The chain crosses the membrane as a helical span at residues Ala-390–Gly-410. Residues Arg-411–Tyr-421 lie on the Extracellular side of the membrane. The chain crosses the membrane as a helical span at residues Thr-422–Ile-443. The Cytoplasmic segment spans residues Asn-444–Val-500. Positions Ala-454–Glu-465 are enriched in basic and acidic residues. The interval Ala-454–Val-500 is disordered. Ser-461 is modified (phosphoserine). Phosphothreonine is present on Thr-466. 3 positions are modified to phosphoserine: Ser-467, Ser-483, and Ser-498. Residues Glu-482–Val-500 are compositionally biased toward basic and acidic residues.

The protein belongs to the major facilitator superfamily. Monocarboxylate porter (TC 2.A.1.13) family. In terms of assembly, interacts with EMB; interaction mediates SLC16A1 targeting to the plasma membrane. Interacts with isoform 2 of BSG; interaction mediates SLC16A1 targeting to the plasma membrane. Widely expressed. Detected in heart and in blood lymphocytes and monocytes (at protein level).

The protein localises to the cell membrane. Its subcellular location is the basolateral cell membrane. It is found in the apical cell membrane. It carries out the reaction (S)-lactate(in) + H(+)(in) = (S)-lactate(out) + H(+)(out). The catalysed reaction is acetate(out) + H(+)(out) = acetate(in) + H(+)(in). The enzyme catalyses acetoacetate(out) + H(+)(out) = acetoacetate(in) + H(+)(in). It catalyses the reaction pyruvate(out) + H(+)(out) = pyruvate(in) + H(+)(in). It carries out the reaction (R)-3-hydroxybutanoate(out) + H(+)(out) = (R)-3-hydroxybutanoate(in) + H(+)(in). The catalysed reaction is 3-methyl-2-oxobutanoate(out) + H(+)(out) = 3-methyl-2-oxobutanoate(in) + H(+)(in). The enzyme catalyses 4-methyl-2-oxopentanoate(out) + H(+)(out) = 4-methyl-2-oxopentanoate(in) + H(+)(in). It catalyses the reaction succinate(in) + 2 H(+)(in) = succinate(out) + 2 H(+)(out). With respect to regulation, selectively inhibited by AZD3965, that acts as a competitive inhibitor binding to the central channel in the outward open conformation. Bidirectional proton-coupled monocarboxylate transporter. Catalyzes the rapid transport across the plasma membrane of many monocarboxylates such as lactate, pyruvate, acetate and the ketone bodies acetoacetate and beta-hydroxybutyrate, and thus contributes to the maintenance of intracellular pH. The transport direction is determined by the proton motive force and the concentration gradient of the substrate monocarboxylate. MCT1 is a major lactate exporter. Plays a role in cellular responses to a high-fat diet by modulating the cellular levels of lactate and pyruvate that contribute to the regulation of central metabolic pathways and insulin secretion, with concomitant effects on plasma insulin levels and blood glucose homeostasis. Facilitates the protonated monocarboxylate form of succinate export, that its transient protonation upon muscle cell acidification in exercising muscle and ischemic heart. Functions via alternate outward- and inward-open conformation states. Protonation and deprotonation of 309-Asp is essential for the conformational transition. This chain is Monocarboxylate transporter 1, found in Homo sapiens (Human).